The following is a 312-amino-acid chain: DNA primase small subunit PriS (312 aa).

Residues D88, D90, and D215 contribute to the active site.

It belongs to the eukaryotic-type primase small subunit family. In terms of assembly, heterodimer of a small subunit (PriS) and a large subunit (PriL). Mg(2+) is required as a cofactor. Mn(2+) serves as cofactor.

In terms of biological role, catalytic subunit of DNA primase, an RNA polymerase that catalyzes the synthesis of short RNA molecules used as primers for DNA polymerase during DNA replication. The small subunit contains the primase catalytic core and has DNA synthesis activity on its own. Binding to the large subunit stabilizes and modulates the activity, increasing the rate of DNA synthesis while decreasing the length of the DNA fragments, and conferring RNA synthesis capability. The DNA polymerase activity may enable DNA primase to also catalyze primer extension after primer synthesis. May also play a role in DNA repair. The protein is DNA primase small subunit PriS of Pyrobaculum arsenaticum (strain DSM 13514 / JCM 11321 / PZ6).